Reading from the N-terminus, the 766-residue chain is ABC-type oligopeptide transporter ABCB9 (766 aa).

A run of 8 helical transmembrane segments spans residues 7–27 (VVVT…IYVF), 47–67 (VLDL…ATIG), 84–104 (LVIT…LLLF), 116–136 (FWAL…LWWL), 185–205 (VAFL…ETFL), 225–245 (FSTA…AAGI), 319–339 (VFMF…FPII), and 416–436 (SGLT…HLVI). One can recognise an ABC transmembrane type-1 domain in the interval 188–471 (LVAASFFLIV…VGSVYSGLMQ (284 aa)). The ABC transporter domain occupies 504 to 740 (VDFENVTFTY…GGLYAKLVQR (237 aa)). 539–546 (GPSGSGKS) contacts ATP.

The protein belongs to the ABC transporter superfamily. ABCB family. MHC peptide exporter (TC 3.A.1.209) subfamily. As to quaternary structure, homodimer. Interacts (via TMD0 region) with LAMP1; this interaction strongly stabilizes ABCB9 and protects ABCB9 against lysosomal degradation. Interacts (via TMD0 region) with LAMP2 (isoform LAMP-2B). Interacts (via TMD0) with YIF1B; this interaction allows (but is not essential) the ER-to-Golgi trafficking and strongly depends on a salt bridge within TMD0. In terms of tissue distribution, highly expressed in testis, and at moderate levels in brain, spinal cord, and thyroid. Not expressed in monocytes but strongly expressed during differentiation of monocytes to dendritic cells and macrophages.

It localises to the lysosome membrane. It carries out the reaction a [oligopeptide](in) + ATP + H2O = a [oligopeptide](out) + ADP + phosphate + H(+). Transport activity is limited by threshold levels of luminal peptide. ATP hydrolysis is reduced in the presence of the spatial challenging 18-mer peptide by 50% and the branched 16-mer peptide by 75%. Transport rate of the longer peptides is strongly reduced. Functionally, ATP-dependent low-affinity peptide transporter which translocates a broad spectrum of peptides from the cytosol to the lysosomal lumen for degradation. Displays a broad peptide length specificity from 6-mer up to at least 59-mer peptides with an optimum of 23-mers. Binds and transports smaller and larger peptides with the same affinity. Favors positively charged, aromatic or hydrophobic residues in the N- and C-terminal positions whereas negatively charged residues as well as asparagine and methionine are not favored. This is ABC-type oligopeptide transporter ABCB9 from Homo sapiens (Human).